The chain runs to 260 residues: FAS1 domain-containing protein SELMODRAFT_448915 (260 aa).

Topologically, residues 1–35 are cytoplasmic; it reads MRRTGRSYKPLLSQLKDHHIPVHPSSRAERAMESR. Residues 36 to 58 form a helical membrane-spanning segment; sequence TLLVLLFVGVVTIVSSGLERAAA. The FAS1 domain maps to 59-198; that stretch reads QDDTDDGILP…IACHGIDRVL (140 aa). At 59–260 the chain is on the extracellular side; it reads QDDTDDGILP…SSASRYPVSE (202 aa). 6 N-linked (GlcNAc...) asparagine glycosylation sites follow: asparagine 118, asparagine 169, asparagine 176, asparagine 201, asparagine 236, and asparagine 247. Residues 210–260 are disordered; that stretch reads PEASPPFGAEQASPAPEALPPGTRSPNNTANPSNRKSNSTRSSASRYPVSE. A compositionally biased stretch (polar residues) spans 233–254; the sequence is RSPNNTANPSNRKSNSTRSSAS.

It localises to the membrane. In Selaginella moellendorffii (Spikemoss), this protein is FAS1 domain-containing protein SELMODRAFT_448915.